The chain runs to 172 residues: WW domain binding protein VOPP1 (172 aa).

The signal sequence occupies residues 1 to 22 (MARPLGRVAALLLGLLMECTEA). Residues 23–60 (KKHCWYFEGLYPTYYICRSYEDCCGSRCCVRALSIQRL) lie on the Extracellular side of the membrane. A helical membrane pass occupies residues 61–81 (WYFWFLLMMGVLFCCGAGFFI). The Cytoplasmic portion of the chain corresponds to 82–172 (RRRMYPPPLI…PPYEQVVKDK (91 aa)). Positions 139 to 172 (QVQPNSPHGGTTYPPPPSYCNTPPPPYEQVVKDK) are disordered. Pro residues predominate over residues 151–165 (YPPPPSYCNTPPPPY).

This sequence belongs to the VOPP1/ECOP family. Interacts with WWOX (via WW domain).

The protein localises to the cytoplasmic vesicle membrane. It localises to the late endosome membrane. Its subcellular location is the lysosome membrane. Increases the transcriptional activity of NFKB1 by facilitating its nuclear translocation, DNA-binding and associated apoptotic response, when overexpressed. May sequester WWOX in lysosomal vesicles and thereby regulate WWOX role as tumor suppressor. The polypeptide is WW domain binding protein VOPP1 (Rattus norvegicus (Rat)).